We begin with the raw amino-acid sequence, 248 residues long: ATP synthase subunit a, chloroplastic (248 aa).

The next 5 membrane-spanning stretches (helical) occupy residues 37–57 (AQVL…AVLA), 96–116 (VPFI…GALF), 135–155 (INTT…AGLH), 200–220 (LVVA…MMFL), and 221–241 (GLFT…AYIG).

It belongs to the ATPase A chain family. In terms of assembly, F-type ATPases have 2 components, CF(1) - the catalytic core - and CF(0) - the membrane proton channel. CF(1) has five subunits: alpha(3), beta(3), gamma(1), delta(1), epsilon(1). CF(0) has four main subunits: a, b, b' and c.

The protein resides in the plastid. It localises to the chloroplast thylakoid membrane. Key component of the proton channel; it plays a direct role in the translocation of protons across the membrane. This is ATP synthase subunit a, chloroplastic from Marchantia polymorpha (Common liverwort).